The following is a 47-amino-acid chain: Large ribosomal subunit protein bL34 (47 aa).

The segment at 1 to 28 (MAKGKRTFQPNNRRRARVHGFRTRMRTR) is disordered.

Belongs to the bacterial ribosomal protein bL34 family.

The protein is Large ribosomal subunit protein bL34 of Corynebacterium efficiens (strain DSM 44549 / YS-314 / AJ 12310 / JCM 11189 / NBRC 100395).